Here is a 425-residue protein sequence, read N- to C-terminus: 3-phosphoshikimate 1-carboxyvinyltransferase (425 aa).

The 3-phosphoshikimate site is built by Lys-22, Ser-23, and Arg-27. Lys-22 contacts phosphoenolpyruvate. Gly-95 and Arg-123 together coordinate phosphoenolpyruvate. 3-phosphoshikimate is bound by residues Ser-169, Ser-170, Gln-171, Ser-197, Asp-313, Asn-336, and Lys-340. A phosphoenolpyruvate-binding site is contributed by Gln-171. The active-site Proton acceptor is Asp-313. Arg-344, Arg-386, and Lys-411 together coordinate phosphoenolpyruvate.

It belongs to the EPSP synthase family. In terms of assembly, monomer.

The protein localises to the cytoplasm. It carries out the reaction 3-phosphoshikimate + phosphoenolpyruvate = 5-O-(1-carboxyvinyl)-3-phosphoshikimate + phosphate. Its pathway is metabolic intermediate biosynthesis; chorismate biosynthesis; chorismate from D-erythrose 4-phosphate and phosphoenolpyruvate: step 6/7. Catalyzes the transfer of the enolpyruvyl moiety of phosphoenolpyruvate (PEP) to the 5-hydroxyl of shikimate-3-phosphate (S3P) to produce enolpyruvyl shikimate-3-phosphate and inorganic phosphate. The polypeptide is 3-phosphoshikimate 1-carboxyvinyltransferase (Pseudoalteromonas translucida (strain TAC 125)).